We begin with the raw amino-acid sequence, 91 residues long: Small ribosomal subunit protein bS20 (91 aa).

Residues 1–23 (MANTPSAKKRAKQAEKRRSHNAS) are disordered. Residues 7-20 (AKKRAKQAEKRRSH) are compositionally biased toward basic residues.

Belongs to the bacterial ribosomal protein bS20 family.

Binds directly to 16S ribosomal RNA. This chain is Small ribosomal subunit protein bS20, found in Pseudomonas aeruginosa (strain LESB58).